A 1377-amino-acid polypeptide reads, in one-letter code: Dicer-like protein 2 (1377 aa).

One can recognise a Helicase ATP-binding domain in the interval 23–203 (MFEASLKENI…MKTLESNLDS (181 aa)). Position 36 to 43 (36 to 43 (MDTGTGKT)) interacts with ATP. The short motif at 144–147 (DEAH) is the DEAH box element. The 164-residue stretch at 368-531 (ALINFLDKFD…AYQDEERRLR (164 aa)) folds into the Helicase C-terminal domain. In terms of domain architecture, Dicer dsRNA-binding fold spans 561–655 (VVTHLYHFCA…LPLTKNPEMR (95 aa)). RNase III domains lie at 914 to 1052 (RLCA…LDGG) and 1092 to 1275 (DGDL…VDSG). Mg(2+) is bound by residues glutamate 1131, aspartate 1261, and glutamate 1264.

It belongs to the helicase family. Dicer subfamily. Requires Mg(2+) as cofactor. The cofactor is Mn(2+).

Functionally, dicer-like endonuclease involved in cleaving double-stranded RNA in the RNA interference (RNAi) pathway. Produces 21 to 25 bp dsRNAs (siRNAs) which target the selective destruction of homologous RNAs leading to sequence-specific suppression of gene expression, called post-transcriptional gene silencing (PTGS). Part of a broad host defense response against viral infection and transposons. The protein is Dicer-like protein 2 (dcl2) of Aspergillus oryzae (strain ATCC 42149 / RIB 40) (Yellow koji mold).